Consider the following 505-residue polypeptide: ATP synthase subunit alpha (505 aa).

ATP is bound at residue 170 to 177 (GDRQTGKT).

This sequence belongs to the ATPase alpha/beta chains family. In terms of assembly, F-type ATPases have 2 components, CF(1) - the catalytic core - and CF(0) - the membrane proton channel. CF(1) has five subunits: alpha(3), beta(3), gamma(1), delta(1), epsilon(1). CF(0) has four main subunits: a(1), b(1), b'(1) and c(9-12).

The protein localises to the cellular thylakoid membrane. The catalysed reaction is ATP + H2O + 4 H(+)(in) = ADP + phosphate + 5 H(+)(out). Its function is as follows. Produces ATP from ADP in the presence of a proton gradient across the membrane. The alpha chain is a regulatory subunit. The protein is ATP synthase subunit alpha of Prochlorococcus marinus (strain MIT 9313).